A 433-amino-acid chain; its full sequence is Type I acyl-CoA thioesterase mpaH (433 aa).

Residues H58–D246 form an abhydrolase domain region. V60 is a substrate binding site. Catalysis depends on S139, which acts as the Nucleophile. A substrate-binding site is contributed by F140. Residues D163 and H365 contribute to the active site.

Belongs to the AB hydrolase superfamily. MpaH hydrolase family. In terms of assembly, homodimer.

Its subcellular location is the peroxisome matrix. The enzyme catalyses mycophenolyl-CoA + H2O = mycophenolate + CoA + H(+). It functions in the pathway secondary metabolite biosynthesis; terpenoid biosynthesis. Type I acyl-CoA thioesterase; part of the gene cluster that mediates the biosynthesis of mycophenolic acid (MPA), the first isolated antibiotic natural product in the world obtained from a culture of Penicillium brevicompactum in 1893. MpaH acts as a peroxisomal acyl-CoA hydrolase that converts MPA-CoA into the final product MPA. The first step of the pathway is the synthesis of 5-methylorsellinic acid (5MOA) by the cytosolic polyketide synthase mpaC. 5MOA is then converted to the phthalide compound 5,7-dihydroxy-4,6-dimethylphthalide (DHMP) by the endoplasmic reticulum-bound cytochrome P450 monooxygenase mpaDE. MpaDE first catalyzes hydroxylation of 5-MOA to 4,6-dihydroxy-2-(hydroxymethyl)-3-methylbenzoic acid (DHMB). MpaDE then acts as a lactone synthase that catalyzes the ring closure to convert DHMB into DHMP. The next step is the prenylation of DHMP by the Golgi apparatus-associated prenyltransferase mpaA to yield farnesyl-DHMP (FDHMP). The ER-bound oxygenase mpaB then mediates the oxidative cleavage the C19-C20 double bond in FDHMP to yield FDHMP-3C via a mycophenolic aldehyde intermediate. The O-methyltransferase mpaG catalyzes the methylation of FDHMP-3C to yield MFDHMP-3C. After the cytosolic methylation of FDHMP-3C, MFDHMP-3C enters into peroxisomes probably via free diffusion due to its low molecular weight. Upon a peroxisomal CoA ligation reaction, catalyzed by a beta-oxidation component enzyme acyl-CoA ligase ACL891, MFDHMP-3C-CoA would then be restricted to peroxisomes for the following beta-oxidation pathway steps. The peroxisomal beta-oxidation machinery than converts MFDHMP-3C-CoA into MPA_CoA, via a beta-oxidation chain-shortening process. Finally mpaH acts as a peroxisomal acyl-CoA hydrolase with high substrate specificity toward MPA-CoA to release the final product MPA. The chain is Type I acyl-CoA thioesterase mpaH from Penicillium brevicompactum.